Consider the following 172-residue polypeptide: Cell division protein SepF (172 aa).

Residues 16–78 (DGDEHYEPQP…RAASNRDDSS (63 aa)) form a disordered region. The span at 17–48 (GDEHYEPQPEGKQTRPAQKNEEYVDQEIRHTE) shows a compositional bias: basic and acidic residues.

Belongs to the SepF family. Homodimer. Interacts with FtsZ.

The protein resides in the cytoplasm. In terms of biological role, cell division protein that is part of the divisome complex and is recruited early to the Z-ring. Probably stimulates Z-ring formation, perhaps through the cross-linking of FtsZ protofilaments. Its function overlaps with FtsA. This is Cell division protein SepF from Renibacterium salmoninarum (strain ATCC 33209 / DSM 20767 / JCM 11484 / NBRC 15589 / NCIMB 2235).